Consider the following 114-residue polypeptide: uncharacterized protein (114 aa).

It to E.coli YggL.

This is an uncharacterized protein from Haemophilus influenzae (strain ATCC 51907 / DSM 11121 / KW20 / Rd).